A 286-amino-acid polypeptide reads, in one-letter code: Putative S-adenosyl-L-methionine-dependent methyltransferase FRAAL3718 (286 aa).

Residues aspartate 122 and 151–152 (DL) each bind S-adenosyl-L-methionine.

Belongs to the UPF0677 family.

Functionally, exhibits S-adenosyl-L-methionine-dependent methyltransferase activity. In Frankia alni (strain DSM 45986 / CECT 9034 / ACN14a), this protein is Putative S-adenosyl-L-methionine-dependent methyltransferase FRAAL3718.